The sequence spans 121 residues: Putative iron-sulfur cluster insertion protein ErpA (121 aa).

Iron-sulfur cluster contacts are provided by Cys-49, Cys-113, and Cys-115.

This sequence belongs to the HesB/IscA family. In terms of assembly, homodimer. Requires iron-sulfur cluster as cofactor.

In terms of biological role, required for insertion of 4Fe-4S clusters. This is Putative iron-sulfur cluster insertion protein ErpA from Methylibium petroleiphilum (strain ATCC BAA-1232 / LMG 22953 / PM1).